The following is a 639-amino-acid chain: Polyphenol oxidase, chloroplastic (639 aa).

The N-terminal 101 residues, 1–101, are a transit peptide targeting the chloroplast; that stretch reads MATLSSPTII…EGANYYNTLA (101 aa). Residues 35-58 are disordered; sequence GVRSVNGKVSCQTKNNNGNDENNQ. 2 disulfide bridges follow: Cys111–Cys127 and Cys126–Cys194. Residues His193, His214, His223, His354, His358, and His388 each contribute to the Cu cation site. A cross-link (2'-(S-cysteinyl)-histidine (Cys-His)) is located at residues 197–214; it reads CDGSYPVLGHNDTRLEVH.

It belongs to the tyrosinase family. Requires Cu(2+) as cofactor.

It localises to the plastid. It is found in the chloroplast thylakoid lumen. The catalysed reaction is 2 catechol + O2 = 2 1,2-benzoquinone + 2 H2O. Its function is as follows. Catalyzes the oxidation of mono- and o-diphenols to o-diquinones. In Spinacia oleracea (Spinach), this protein is Polyphenol oxidase, chloroplastic.